The primary structure comprises 131 residues: Arsenate reductase (131 aa).

Residues cysteine 10, cysteine 82, and cysteine 89 each act as nucleophile in the active site. 2 disulfide bridges follow: cysteine 10-cysteine 82 and cysteine 82-cysteine 89.

The protein belongs to the low molecular weight phosphotyrosine protein phosphatase family. Thioredoxin-coupled ArsC subfamily.

It is found in the cytoplasm. It catalyses the reaction arsenate + [thioredoxin]-dithiol + H(+) = arsenite + [thioredoxin]-disulfide + H2O. Its function is as follows. Catalyzes the reduction of arsenate [As(V)] to arsenite [As(III)]. The sequence is that of Arsenate reductase from Staphylococcus xylosus.